Reading from the N-terminus, the 726-residue chain is L-lysine 6-oxidase (726 aa).

A cross-link (4'-cysteinyl-tryptophylquinone (Cys-Trp)) is located at residues 516 to 581 (CTIQTVNFSE…LPPAYYSYWW (66 aa)). Trp581 bears the Tryptophylquinone mark.

In terms of assembly, homotetramer. Cysteine tryptophylquinone residue is required as a cofactor. The cysteine tryptophylquinone (CTQ) is generated by oxidation of the indole ring of a tryptophan residue to form tryptophylquinone, followed by covalent cross-linking with a cysteine residue.

It localises to the secreted. The catalysed reaction is L-lysine + O2 + H2O = (S)-2-amino-6-oxohexanoate + H2O2 + NH4(+). With respect to regulation, inhibited by aminoguanidine, amiloride and beta-aminopropionitrile. Has antibacterial activity against a wide spectrum of Gram-positive and Gram-negative bacteria including nosocomial isolates of S.aureus and Pseudomonas sp. The antimicrobial activity is due to hydrogen peroxide generated by its lysine oxidase activity. Also has autotoxic activity. Involved in biofilm differentiation; responsible for cell death within microcolonies during biofilm development which is linked to the generation of a phenotypically diverse dispersal population and thus may play a role in colonization. This chain is L-lysine 6-oxidase (lodA), found in Marinomonas mediterranea (strain ATCC 700492 / JCM 21426 / NBRC 103028 / MMB-1).